Consider the following 339-residue polypeptide: Trace amine-associated receptor 1 (339 aa).

The Extracellular segment spans residues 1 to 25; that stretch reads MMPFCHNIINISCVKNNWSNDVRAS. 3 disulfides stabilise this stretch: Cys-5/Cys-178, Cys-13/Cys-88, and Cys-96/Cys-182. 2 N-linked (GlcNAc...) asparagine glycosylation sites follow: Asn-10 and Asn-17. Residues 26 to 46 traverse the membrane as a helical segment; sequence LYSLMVLIILTTLVGNLIVIV. The Cytoplasmic segment spans residues 47-59; sequence SISHFKELHTPTN. A helical transmembrane segment spans residues 60–80; the sequence is WLIHSMATVDFLPGCLVMPYS. Topologically, residues 81 to 98 are extracellular; the sequence is MVRSAEHCWYFGEVFCKI. Residues 99 to 119 traverse the membrane as a helical segment; the sequence is HTSTDIMLSSASIFHLSFISI. Asp-103 contacts 2-phenylethylamine. Residues 120 to 136 lie on the Cytoplasmic side of the membrane; sequence DRYYAVCDPLRYKAKIN. The helical transmembrane segment at 137–157 threads the bilayer; the sequence is ILVICVMIFISWSVPAVFAFG. Topologically, residues 158-188 are extracellular; sequence MIFLELNFKGAEEIYYKHVHCRGGCSVFFSK. A helical transmembrane segment spans residues 189 to 209; that stretch reads ISGVLTFMTSFYIPGSIMLCV. Over 210–252 the chain is Cytoplasmic; it reads YYRIYLIAKEQARLINDANQKLQIGLEMKNGISQSKERKAVKT. Residues 253-273 form a helical membrane-spanning segment; it reads LGIVMGVFLICWCPFFICTVM. The Extracellular portion of the chain corresponds to 274-287; the sequence is DPFLHYIIPPTLND. The helical transmembrane segment at 288 to 308 threads the bilayer; sequence VLIWFGYLNSTFNPMVYAFFY. Residues 309–339 are Cytoplasmic-facing; the sequence is PWFRKALKMMLFGKIFQKDSSRCKLFLELSS.

It belongs to the G-protein coupled receptor 1 family.

The protein localises to the endomembrane system. The protein resides in the endoplasmic reticulum membrane. It localises to the cell membrane. In terms of biological role, intracellular G-protein coupled receptor for trace amines, which recognizes endogenous amine-containing metabolites such as beta-phenylethylamine (beta-PEA), 3-iodothyronamine (T1AM), isoamylamine (IAA), cadaverine (CAD), cyclohexylamine (CHA), p-tyramine (p-TYR), trimethylamine (TMA), octopamine and tryptamine. Also functions as a receptor for various drugs and psychoactive substances, such as amphetamine and methamphetamine. Unresponsive to classical biogenic amines, such as epinephrine and histamine and only partially activated by dopamine and serotonin. Expressed in both the central and peripheral nervous system: TAAR1 activation regulates the activity of several neurotransmitter signaling pathways by (1) decreasing the basal firing rates of the neurons involved and by (2) lowering the sensitivity of receptors to neurotransmitters. Ligand binding causes a conformation change that triggers signaling via guanine nucleotide-binding proteins (G proteins) and modulates the activity of downstream effectors. TAAR1 is coupled with different G(i)/G(o)-, G(s)- or G(q)/G(11) classes of G alpha proteins depending on the ligand. CAD-binding is coupled to G(i)/G(o) G alpha proteins and mediates inhibition of adenylate cyclase activity. T1AM- or beta-PEA-binding is coupled to G(s) G alpha proteins and mediates activation of adenylate cyclase activity. CHA- or IAA-binding is coupled to G(q)/G(11) G alpha proteins and activates phospholipase C-beta, releasing diacylglycerol (DAG) and inositol 1,4,5-trisphosphate (IP3) second messengers. TMA-binding is coupled with all three G(i)/G(o)-, G(s)- or G(q)/G(11) G alpha protein subtypes. In Pan troglodytes (Chimpanzee), this protein is Trace amine-associated receptor 1 (TAAR1).